A 287-amino-acid polypeptide reads, in one-letter code: tRNA-cytidine(32) 2-sulfurtransferase (287 aa).

Positions 58-63 (SGGKDS) match the PP-loop motif motif. Positions 133, 136, and 224 each coordinate [4Fe-4S] cluster.

This sequence belongs to the TtcA family. In terms of assembly, homodimer. The cofactor is Mg(2+). [4Fe-4S] cluster is required as a cofactor.

It localises to the cytoplasm. It carries out the reaction cytidine(32) in tRNA + S-sulfanyl-L-cysteinyl-[cysteine desulfurase] + AH2 + ATP = 2-thiocytidine(32) in tRNA + L-cysteinyl-[cysteine desulfurase] + A + AMP + diphosphate + H(+). Its pathway is tRNA modification. Catalyzes the ATP-dependent 2-thiolation of cytidine in position 32 of tRNA, to form 2-thiocytidine (s(2)C32). The sulfur atoms are provided by the cysteine/cysteine desulfurase (IscS) system. In Dinoroseobacter shibae (strain DSM 16493 / NCIMB 14021 / DFL 12), this protein is tRNA-cytidine(32) 2-sulfurtransferase.